Here is a 151-residue protein sequence, read N- to C-terminus: Small ribosomal subunit protein uS15 (151 aa).

The protein belongs to the universal ribosomal protein uS15 family. As to quaternary structure, component of the small ribosomal subunit.

The protein resides in the cytoplasm. In terms of biological role, component of the small ribosomal subunit. The ribosome is a large ribonucleoprotein complex responsible for the synthesis of proteins in the cell. The protein is Small ribosomal subunit protein uS15 (rps13) of Xenopus laevis (African clawed frog).